The following is a 177-amino-acid chain: Nucleoside triphosphate/diphosphate phosphatase (177 aa).

Residue Arg23 is the Proton donor of the active site. Asn87, Asp103, Asp105, Asp107, Asp120, and Glu123 together coordinate Mg(2+).

The protein belongs to the Ntdp family. Mg(2+) serves as cofactor.

It catalyses the reaction a ribonucleoside 5'-triphosphate + H2O = a ribonucleoside 5'-diphosphate + phosphate + H(+). It carries out the reaction a ribonucleoside 5'-diphosphate + H2O = a ribonucleoside 5'-phosphate + phosphate + H(+). In terms of biological role, has nucleoside phosphatase activity towards nucleoside triphosphates and nucleoside diphosphates. The chain is Nucleoside triphosphate/diphosphate phosphatase from Streptococcus suis (strain 98HAH33).